The following is a 252-amino-acid chain: Uridylate kinase (252 aa).

24–27 (KLSG) lines the ATP pocket. Positions 32–37 (GEEGFG) are involved in allosteric activation by GTP. UMP is bound at residue Gly-66. Positions 67 and 71 each coordinate ATP. UMP is bound by residues Asp-86 and 147–154 (TGNPFFTT). ATP-binding residues include Thr-174, Tyr-180, and Asp-183.

Belongs to the UMP kinase family. As to quaternary structure, homohexamer.

It is found in the cytoplasm. The enzyme catalyses UMP + ATP = UDP + ADP. The protein operates within pyrimidine metabolism; CTP biosynthesis via de novo pathway; UDP from UMP (UMPK route): step 1/1. Allosterically activated by GTP. Inhibited by UTP. Its function is as follows. Catalyzes the reversible phosphorylation of UMP to UDP. This is Uridylate kinase from Alcanivorax borkumensis (strain ATCC 700651 / DSM 11573 / NCIMB 13689 / SK2).